Consider the following 511-residue polypeptide: Cobyric acid synthase (511 aa).

The 193-residue stretch at 251-443 folds into the GATase cobBQ-type domain; that stretch reads LLDIAIICLP…IHGIFDNDVF (193 aa). The active-site Nucleophile is Cys-332. The active site involves His-435.

The protein belongs to the CobB/CobQ family. CobQ subfamily.

The protein operates within cofactor biosynthesis; adenosylcobalamin biosynthesis. Its function is as follows. Catalyzes amidations at positions B, D, E, and G on adenosylcobyrinic A,C-diamide. NH(2) groups are provided by glutamine, and one molecule of ATP is hydrogenolyzed for each amidation. This chain is Cobyric acid synthase, found in Listeria monocytogenes serotype 4a (strain HCC23).